The sequence spans 176 residues: Protein KleF (176 aa).

The polypeptide is Protein KleF (kleF) (Escherichia coli).